We begin with the raw amino-acid sequence, 1131 residues long: Filamin A-interacting protein 1-like (1131 aa).

The segment at 1–62 is disordered; the sequence is MRSRSSNAEG…KSHTGKGHHT (62 aa). Residues 50–62 are compositionally biased toward basic and acidic residues; sequence VSEKSHTGKGHHT. Coiled coils occupy residues 139 to 583 and 610 to 780; these read NELD…LSKV and SKST…KSLR. At Ser789 the chain carries Phosphoserine. Phosphothreonine is present on residues Thr984 and Thr992. Position 1050 is a phosphoserine (Ser1050).

Belongs to the FILIP1 family.

The protein localises to the cytoplasm. It localises to the membrane. Its subcellular location is the nucleus. Acts as a regulator of the antiangiogenic activity on endothelial cells. When overexpressed in endothelial cells, leads to inhibition of cell proliferation and migration and an increase in apoptosis. Inhibits melanoma growth When expressed in tumor-associated vasculature. This Mus musculus (Mouse) protein is Filamin A-interacting protein 1-like (Filip1l).